We begin with the raw amino-acid sequence, 114 residues long: Nucleoid-associated protein PCC8801_2554 (114 aa).

This sequence belongs to the YbaB/EbfC family. In terms of assembly, homodimer.

The protein localises to the cytoplasm. It localises to the nucleoid. In terms of biological role, binds to DNA and alters its conformation. May be involved in regulation of gene expression, nucleoid organization and DNA protection. This Rippkaea orientalis (strain PCC 8801 / RF-1) (Cyanothece sp. (strain PCC 8801)) protein is Nucleoid-associated protein PCC8801_2554.